Here is a 201-residue protein sequence, read N- to C-terminus: Recombination protein RecR (201 aa).

The C4-type zinc-finger motif lies at 60-75 (CKYCQSLTEKDVCDIC). A Toprim domain is found at 83-177 (SKLCIIESML…KISRIGFGVP (95 aa)).

This sequence belongs to the RecR family.

In terms of biological role, may play a role in DNA repair. It seems to be involved in an RecBC-independent recombinational process of DNA repair. It may act with RecF and RecO. In Francisella philomiragia subsp. philomiragia (strain ATCC 25017 / CCUG 19701 / FSC 153 / O#319-036), this protein is Recombination protein RecR.